The sequence spans 473 residues: Histone-lysine N-methyltransferase SET5 (473 aa).

An SET domain is found at 107 to 381; that stretch reads ANVHIIMTSK…SGEELTTTYV (275 aa).

It belongs to the class V-like SAM-binding methyltransferase superfamily. Histone-lysine methyltransferase family. SET5 subfamily.

Its subcellular location is the nucleus. The protein localises to the chromosome. The protein resides in the cytoplasm. The catalysed reaction is L-lysyl-[histone] + S-adenosyl-L-methionine = N(6)-methyl-L-lysyl-[histone] + S-adenosyl-L-homocysteine + H(+). Its function is as follows. Histone methyltransferase that monomethylates 'Lys-5', 'Lys-8' and 'Lys-12' of histone H4 (H4K5me1, H4K8me1 and H4K12me1, respectively), thereby controlling gene expression and remodeling chromatin structures. This is Histone-lysine N-methyltransferase SET5 (SET5) from Candida albicans (strain SC5314 / ATCC MYA-2876) (Yeast).